Consider the following 295-residue polypeptide: sn-glycerol-3-phosphate transport system permease protein UgpA (295 aa).

Topologically, residues 1–11 are cytoplasmic; it reads MSSSRPVFRSR. The helical transmembrane segment at 12–32 threads the bilayer; the sequence is WLPYLLVAPQLIITVIFFIWP. Residues 33-80 are Periplasmic-facing; sequence AGEALWYSLQSVDPFGFSSQFVGLDNFVALFHDSYYIDSFWTTIKFST. The ABC transmembrane type-1 domain maps to 76 to 284; it reads IKFSTFVTVS…FLVIVLTVVQ (209 aa). Residues 81 to 101 traverse the membrane as a helical segment; sequence FVTVSGLLVSLFFAALVEYIV. Over 102–109 the chain is Cytoplasmic; sequence RGSRFYQT. A helical transmembrane segment spans residues 110–130; the sequence is LMLLPYAVAPAVAAVLWIFLF. The Periplasmic portion of the chain corresponds to 131–156; the sequence is NPGRGLITHFLAEFGYDWNHAQNSGQ. The helical transmembrane segment at 157–177 threads the bilayer; sequence AMFLVVFASVWKQISYNFLFF. The Cytoplasmic segment spans residues 178-207; that stretch reads YAALQSIPRSLIEAAAIDGVGPIRRFFKIA. Residues 208 to 228 traverse the membrane as a helical segment; it reads LPLIAPVSFFLLVVNLVYAFF. At 229-262 the chain is on the periplasmic side; that stretch reads DTFPVIDAATSGGPVQAITTLIYKIYREGFTGLD. The chain crosses the membrane as a helical span at residues 263–283; that stretch reads LASSAAQSVVLMFLVIVLTVV. Topologically, residues 284-295 are cytoplasmic; that stretch reads QFRYVESKVRYQ.

It belongs to the binding-protein-dependent transport system permease family. UgpAE subfamily. The complex is composed of two ATP-binding proteins (UgpC), two transmembrane proteins (UgpA and UgpE) and a solute-binding protein (UgpB).

The protein resides in the cell inner membrane. Functionally, part of the ABC transporter complex UgpBAEC involved in sn-glycerol-3-phosphate (G3P) import. Probably responsible for the translocation of the substrate across the membrane. This is sn-glycerol-3-phosphate transport system permease protein UgpA (ugpA) from Shigella dysenteriae serotype 1 (strain Sd197).